A 372-amino-acid chain; its full sequence is Biglycan (372 aa).

Positions 1–19 (MPTMWPLWLLASLLALSQA) are cleaved as a signal peptide. Positions 20-40 (LPFEQKGFWDFTLDDGLPMLN) are excised as a propeptide. O-linked (Xyl...) (glycosaminoglycan) serine glycans are attached at residues serine 45 and serine 51. 2 cysteine pairs are disulfide-bonded: cysteine 67–cysteine 73 and cysteine 71–cysteine 80. 12 LRR repeats span residues 86–106 (KAVP…NNEI), 107–130 (SELR…NNKI), 131–154 (SKIH…KNHL), 155–175 (VEIP…DNRI), 176–199 (RKVP…GNPL), 200–224 (ENSG…EAKL), 225–245 (TGIP…HNKI), 246–269 (QAIE…HNQI), 270–293 (RMIE…NNKL), 294–316 (SRVP…TNNI), 317–346 (TKVG…NNPV), and 347–372 (PYWE…NYKK). N-linked (GlcNAc...) asparagine glycosylation is found at asparagine 274 and asparagine 315. A disulfide bond links cysteine 325 and cysteine 358.

The protein belongs to the small leucine-rich proteoglycan (SLRP) family. SLRP class I subfamily. Homodimer. Forms a ternary complex with MFAP2 and ELN. The two attached glycosaminoglycan chains can be either chondroitin sulfate or dermatan sulfate.

It localises to the secreted. The protein localises to the extracellular space. Its subcellular location is the extracellular matrix. Functionally, may be involved in collagen fiber assembly. The chain is Biglycan (BGN) from Equus caballus (Horse).